A 195-amino-acid polypeptide reads, in one-letter code: Imidazoleglycerol-phosphate dehydratase (195 aa).

The protein belongs to the imidazoleglycerol-phosphate dehydratase family.

It localises to the cytoplasm. It catalyses the reaction D-erythro-1-(imidazol-4-yl)glycerol 3-phosphate = 3-(imidazol-4-yl)-2-oxopropyl phosphate + H2O. It participates in amino-acid biosynthesis; L-histidine biosynthesis; L-histidine from 5-phospho-alpha-D-ribose 1-diphosphate: step 6/9. This chain is Imidazoleglycerol-phosphate dehydratase, found in Ruegeria pomeroyi (strain ATCC 700808 / DSM 15171 / DSS-3) (Silicibacter pomeroyi).